The primary structure comprises 459 residues: Replication initiator protein (459 aa).

In terms of biological role, essential for pSAM2 replication. The sequence is that of Replication initiator protein (repSA) from Streptomyces ambofaciens.